The sequence spans 1374 residues: DNA-directed RNA polymerase subunit beta (1374 aa).

This sequence belongs to the RNA polymerase beta chain family. As to quaternary structure, the RNAP catalytic core consists of 2 alpha, 1 beta, 1 beta' and 1 omega subunit. When a sigma factor is associated with the core the holoenzyme is formed, which can initiate transcription.

It catalyses the reaction RNA(n) + a ribonucleoside 5'-triphosphate = RNA(n+1) + diphosphate. Its function is as follows. DNA-dependent RNA polymerase catalyzes the transcription of DNA into RNA using the four ribonucleoside triphosphates as substrates. The protein is DNA-directed RNA polymerase subunit beta of Paracidovorax citrulli (strain AAC00-1) (Acidovorax citrulli).